A 563-amino-acid chain; its full sequence is MTKTSRPLYISYAGPSLLEMPLLNKGSAFTPQERVEFNLIGLLPQNVETIEEQVTRVYSQYKQCASDLDKHIYLRSIQDNNETLFFRLLDSHLDEMLPIIYTPTVGQACQEFSKIYRTHRGLFISYPERDRIDDILRSATKDRIKIIVVTDSERILGLGDQGIGGMGIPIGKLSLYTACGGISPAYTLPIVLDVGTNNRELLDDPMYMGWRHERVSGKEYEDFIALFIDAVQRRWPDVLLQFEDFAQSNAMPLLEKYRDELCCFNDDIQGTASVAVGTLLAACKAKNETLGQQKVVFVGAGSAGCGIAEHIIAAMRIEGLSESEARKRIFMVDRFGLLTEGMDNLLDFQKRLAQKTADVSGWTAGTEAFPQLLDVVTNAGATVLIGVSGQRGLFTEQVIRELHKHCAKPLVMPLSNPTSKVEATPEEILRWTDGNALVATGSPFAPVEINGRTVHIAQCNNSYIFPGIGLGVVACKASRITDRMLMAASNALAECSPMVTGQGDAVLPPLKEIQQVSRKIALAVAKEAQAEGLALETSEEALLEAIERNFWLPGYRAYRRRSV.

The active-site Proton donor is Tyr-101. Arg-154 lines the NAD(+) pocket. Lys-172 acts as the Proton acceptor in catalysis. Positions 243, 244, and 267 each coordinate a divalent metal cation. Positions 267 and 416 each coordinate NAD(+).

The protein belongs to the malic enzymes family. In terms of assembly, homotetramer. It depends on Mg(2+) as a cofactor. Requires Mn(2+) as cofactor.

The catalysed reaction is (S)-malate + NAD(+) = pyruvate + CO2 + NADH. It carries out the reaction oxaloacetate + H(+) = pyruvate + CO2. The sequence is that of NAD-dependent malic enzyme from Pseudomonas savastanoi pv. phaseolicola (strain 1448A / Race 6) (Pseudomonas syringae pv. phaseolicola (strain 1448A / Race 6)).